Here is a 105-residue protein sequence, read N- to C-terminus: Phosphoribosyl-AMP cyclohydrolase (105 aa).

Residue D72 participates in Mg(2+) binding. Position 73 (C73) interacts with Zn(2+). Mg(2+)-binding residues include D74 and D76. Residues C89 and C96 each coordinate Zn(2+).

Belongs to the PRA-CH family. In terms of assembly, homodimer. It depends on Mg(2+) as a cofactor. Requires Zn(2+) as cofactor.

The protein localises to the cytoplasm. The catalysed reaction is 1-(5-phospho-beta-D-ribosyl)-5'-AMP + H2O = 1-(5-phospho-beta-D-ribosyl)-5-[(5-phospho-beta-D-ribosylamino)methylideneamino]imidazole-4-carboxamide. It functions in the pathway amino-acid biosynthesis; L-histidine biosynthesis; L-histidine from 5-phospho-alpha-D-ribose 1-diphosphate: step 3/9. Functionally, catalyzes the hydrolysis of the adenine ring of phosphoribosyl-AMP. In Listeria monocytogenes serotype 4b (strain CLIP80459), this protein is Phosphoribosyl-AMP cyclohydrolase.